Consider the following 83-residue polypeptide: Kunitz-type serine protease inhibitor homolog beta-bungarotoxin B6 chain (83 aa).

Positions Met-1–Ser-24 are cleaved as a signal peptide. A BPTI/Kunitz inhibitor domain is found at Cys-29–Cys-79. 3 disulfide bridges follow: Cys-29–Cys-79, Cys-38–Cys-62, and Cys-54–Cys-75.

The protein belongs to the venom Kunitz-type family. In terms of assembly, heterodimer; disulfide-linked. The A chains have phospholipase A2 activity and the B chains show homology with the basic protease inhibitors. Expressed by the venom gland.

Its subcellular location is the secreted. Its function is as follows. Beta-bungarotoxins are presynaptic neurotoxins of the venom. The B chain is homologous to venom basic protease inhibitors but has no protease inhibitor activity and blocks voltage-gated potassium channels (Kv). The protein is Kunitz-type serine protease inhibitor homolog beta-bungarotoxin B6 chain of Bungarus multicinctus (Many-banded krait).